Reading from the N-terminus, the 286-residue chain is ATP synthase gamma chain (286 aa).

Belongs to the ATPase gamma chain family. F-type ATPases have 2 components, CF(1) - the catalytic core - and CF(0) - the membrane proton channel. CF(1) has five subunits: alpha(3), beta(3), gamma(1), delta(1), epsilon(1). CF(0) has three main subunits: a, b and c.

It localises to the cell inner membrane. Its function is as follows. Produces ATP from ADP in the presence of a proton gradient across the membrane. The gamma chain is believed to be important in regulating ATPase activity and the flow of protons through the CF(0) complex. In Solibacter usitatus (strain Ellin6076), this protein is ATP synthase gamma chain.